Reading from the N-terminus, the 440-residue chain is V-type ATP synthase beta chain (440 aa).

The protein belongs to the ATPase alpha/beta chains family.

Produces ATP from ADP in the presence of a proton gradient across the membrane. The V-type beta chain is a regulatory subunit. This chain is V-type ATP synthase beta chain, found in Geotalea uraniireducens (strain Rf4) (Geobacter uraniireducens).